The following is a 370-amino-acid chain: Serine/threonine-protein kinase RIM11/MSD1 (370 aa).

Positions 39–322 (FPTTEVVGHG…ALQCLCSPYF (284 aa)) constitute a Protein kinase domain. Residues 45 to 53 (VGHGSFGVV) and lysine 68 each bind ATP. Aspartate 164 serves as the catalytic Proton acceptor. At tyrosine 199 the chain carries Phosphotyrosine.

It belongs to the protein kinase superfamily. CMGC Ser/Thr protein kinase family. GSK-3 subfamily. In terms of assembly, interacts with TDA1.

The catalysed reaction is L-seryl-[protein] + ATP = O-phospho-L-seryl-[protein] + ADP + H(+). The enzyme catalyses L-threonyl-[protein] + ATP = O-phospho-L-threonyl-[protein] + ADP + H(+). Functionally, serine/threonine protein kinase that is thought to function in regulating kinetochore activity and entry into meiosis. Could phosphorylate IME1. This Saccharomyces cerevisiae (strain ATCC 204508 / S288c) (Baker's yeast) protein is Serine/threonine-protein kinase RIM11/MSD1 (RIM11).